A 234-amino-acid polypeptide reads, in one-letter code: Sugar fermentation stimulation protein A (234 aa).

Positions 201 to 220 (LLTEAQQRGVEILAYKAEIS) form a DNA-binding region, H-T-H motif.

It belongs to the SfsA family.

Functionally, binds to DNA non-specifically. Could be a regulatory factor involved in maltose metabolism. The chain is Sugar fermentation stimulation protein A from Escherichia fergusonii (strain ATCC 35469 / DSM 13698 / CCUG 18766 / IAM 14443 / JCM 21226 / LMG 7866 / NBRC 102419 / NCTC 12128 / CDC 0568-73).